Here is a 590-residue protein sequence, read N- to C-terminus: Histone-binding protein N1/N2 (590 aa).

The tract at residues 1-30 (MAEETAALSTEKTEDTSTAPSTSAEKADGI) is disordered. A TPR 1 repeat occupies 36–69 (AKRLMGAGQKHLVMKDVRSAVNLFQEASSLLAKQ). Residues 102–328 (ALEGMPEDDE…EKETEEEDVG (227 aa)) are disordered. Positions 106-120 (MPEDDEEEAEKEEDP) are enriched in acidic residues. 2 stretches are compositionally biased toward basic and acidic residues: residues 128-250 (LDEK…DAKE) and 262-275 (AEEKMDSEASESKE). Residues 293–327 (EKMEEEEEGEDSEENEDGTEENEGTEEKETEEEDV) are compositionally biased toward acidic residues. TPR repeat units lie at residues 357–390 (AQAHQKLGEVCIESENYSQAVEDFLACLNIQKEH) and 399–432 (AETHYHLGLAYQYSSKHEEAISHFTQSIGVIEKR). The disordered stretch occupies residues 492-590 (GGSSGFSKEN…METATVESTA (99 aa)). Positions 496-525 (GFSKENGSTSSSSAVEKSGDSTVPVTNCVS) are enriched in polar residues. A Nuclear localization signal motif is present at residues 531–537 (VRKKRKT). Residues 536–553 (KTEEESPLKDKDAKKSKQ) are compositionally biased toward basic and acidic residues.

This sequence belongs to the NASP family.

It localises to the nucleus. This protein is involved in nucleosome assembly. It is bound to H3 and H4 in the absence of DNA, but released from H3 and H4 in the presence of DNA. This is Histone-binding protein N1/N2 from Xenopus laevis (African clawed frog).